An 837-amino-acid chain; its full sequence is Protein translocase subunit SecA (837 aa).

ATP-binding positions include Gln-85, 103–107 (GEGKT), and Asp-493. 4 residues coordinate Zn(2+): Cys-821, Cys-823, Cys-832, and His-833.

Belongs to the SecA family. In terms of assembly, monomer and homodimer. Part of the essential Sec protein translocation apparatus which comprises SecA, SecYEG and auxiliary proteins SecDF. Other proteins may also be involved. It depends on Zn(2+) as a cofactor.

The protein localises to the cell membrane. Its subcellular location is the cytoplasm. The enzyme catalyses ATP + H2O + cellular proteinSide 1 = ADP + phosphate + cellular proteinSide 2.. In terms of biological role, part of the Sec protein translocase complex. Interacts with the SecYEG preprotein conducting channel. Has a central role in coupling the hydrolysis of ATP to the transfer of proteins into and across the cell membrane, serving as an ATP-driven molecular motor driving the stepwise translocation of polypeptide chains across the membrane. This is Protein translocase subunit SecA from Streptococcus pneumoniae (strain P1031).